Reading from the N-terminus, the 550-residue chain is NAD(P)H-quinone oxidoreductase chain 4 3 (550 aa).

14 helical membrane-spanning segments follow: residues 5 to 25 (FPWL…IPLL), 36 to 56 (YALI…WQHF), 86 to 106 (ISAP…FSAW), 114 to 134 (LFYA…VAKD), 135 to 155 (LFLF…LVCI), 168 to 188 (FLLY…ALSL), 212 to 232 (MWLY…FPLH), 243 to 263 (SSPV…YGLM), 277 to 297 (FAPL…FSSF), 311 to 331 (VSHM…GING), 332 to 352 (AMLQ…LAGV), 375 to 395 (VFAM…MSGF), 418 to 438 (ITVF…LSML), and 489 to 509 (IFIA…PKLL).

The protein belongs to the complex I subunit 4 family.

It localises to the cellular thylakoid membrane. It carries out the reaction a plastoquinone + NADH + (n+1) H(+)(in) = a plastoquinol + NAD(+) + n H(+)(out). It catalyses the reaction a plastoquinone + NADPH + (n+1) H(+)(in) = a plastoquinol + NADP(+) + n H(+)(out). Its function is as follows. NDH-1 shuttles electrons from NAD(P)H, via FMN and iron-sulfur (Fe-S) centers, to quinones in the respiratory chain. The immediate electron acceptor for the enzyme in this species is believed to be plastoquinone. Couples the redox reaction to proton translocation (for every two electrons transferred, four hydrogen ions are translocated across the cytoplasmic membrane), and thus conserves the redox energy in a proton gradient. This is NAD(P)H-quinone oxidoreductase chain 4 3 from Picosynechococcus sp. (strain ATCC 27264 / PCC 7002 / PR-6) (Agmenellum quadruplicatum).